The chain runs to 258 residues: Glucanase inhibitor protein 3 (258 aa).

The signal sequence occupies residues 1–19 (MKIISAVAASSIALGAVSA). Residues 29–256 (VLGGAVVPSG…ALEWINSITK (228 aa)) form the Peptidase S1 domain. Cysteines 56 and 72 form a disulfide. N-linked (GlcNAc...) asparagine glycosylation is found at Asn90, Asn105, and Asn110. Cystine bridges form between Cys180–Cys192 and Cys202–Cys233.

The protein belongs to the peptidase S1 family. In terms of assembly, forms an apoplastic complex with host endoglucanases in tomato leaves during P.infestans infection.

Its subcellular location is the secreted. Functionally, secreted effector that suppresses host plant glucan elicitor-mediated defense responses. Targets host endoglucanases and inhibits the endoglucanase-mediated release of elicitor-active glucan oligosaccharides from P.infestans cell walls. The protein is Glucanase inhibitor protein 3 of Phytophthora infestans (Potato late blight agent).